The chain runs to 422 residues: E3 ubiquitin-protein ligase IE2 (422 aa).

Over residues methionine 1–proline 10 the composition is skewed to polar residues. Disordered stretches follow at residues methionine 1–isoleucine 86 and serine 165–glutamate 215. Residues serine 14–isoleucine 26 are compositionally biased toward basic residues. A compositionally biased stretch (low complexity) spans proline 36–serine 63. Residues glutamate 71–glutamate 80 show a composition bias toward basic and acidic residues. Positions aspartate 179–glutamine 196 are enriched in polar residues. Residues glutamate 200–glutamate 215 show a composition bias toward acidic residues. Residues cysteine 220–alanine 268 form an RING-type; degenerate zinc finger. Positions isoleucine 314–leucine 414 form a coiled coil.

This sequence belongs to the alphabaculovirus IE2 protein family. Homooligomer. Auto-ubiquitinated.

It localises to the host nucleus. It carries out the reaction S-ubiquitinyl-[E2 ubiquitin-conjugating enzyme]-L-cysteine + [acceptor protein]-L-lysine = [E2 ubiquitin-conjugating enzyme]-L-cysteine + N(6)-ubiquitinyl-[acceptor protein]-L-lysine.. In terms of biological role, RING-finger E3 ubiquitin ligase that plays an important regulatory role during the initial stages of infection. Migrates to specific nuclear foci early in infection supposely to prepare the sites for viral replication by targeting and ubiquitinating host proteins. In Bombyx mori nuclear polyhedrosis virus (BmNPV), this protein is E3 ubiquitin-protein ligase IE2 (IE2).